Reading from the N-terminus, the 217-residue chain is Small ribosomal subunit protein eS6 (217 aa).

The protein belongs to the eukaryotic ribosomal protein eS6 family.

The polypeptide is Small ribosomal subunit protein eS6 (Hyperthermus butylicus (strain DSM 5456 / JCM 9403 / PLM1-5)).